A 36-amino-acid polypeptide reads, in one-letter code: Alpha-amylase inhibitor AI-3688 (36 aa).

A disulfide bridge links Cys-9 with Cys-25.

Functionally, inhibits mammalian alpha-amylases specifically but has no action on plant and microbial alpha-amylases. This is Alpha-amylase inhibitor AI-3688 from Kitasatospora aureofaciens (Streptomyces aureofaciens).